The following is a 505-amino-acid chain: Folate transporter 1 (505 aa).

A run of 4 helical transmembrane segments spans residues 58–78 (SLIA…IYLL), 89–109 (LSIV…WAVI), 122–142 (YYLL…GLIT), and 146–166 (LFIT…CNVI). 3 N-linked (GlcNAc...) asparagine glycosylation sites follow: Asn-177, Asn-181, and Asn-186. The next 2 membrane-spanning stretches (helical) occupy residues 192 to 212 (AFRK…LLLI) and 216 to 236 (HIFL…FFII). Residue Asn-240 is glycosylated (N-linked (GlcNAc...) asparagine). The next 5 membrane-spanning stretches (helical) occupy residues 266–286 (IIFI…FFYI), 300–320 (MAMF…LFFT), 326–346 (KLLL…LVVI), 352–372 (FLFI…EFIA), and 405–425 (FASI…NITS). Asn-427 carries an N-linked (GlcNAc...) asparagine glycan. The helical transmembrane segment at 431 to 451 (LPYMIIICCLTNIIPIFFLYI) threads the bilayer. N-linked (GlcNAc...) asparagine glycosylation occurs at Asn-454.

It belongs to the major facilitator superfamily. Folate-biopterin transporter (TC 2.A.71) family.

The protein localises to the cell membrane. It catalyses the reaction folate(in) + H(+)(in) = folate(out) + H(+)(out). Transport of folates is inhibited by probenecid and methotrexate. Folate transporter with broad substrate specificity. Transports folic acid, folinic acid, pteroic acid, dihydropteroic acid, the folate precursor p-amino benzoic acid (pABA) and the human folate catabolite pABA monoglutamate. The protein is Folate transporter 1 of Plasmodium falciparum (isolate 3D7).